We begin with the raw amino-acid sequence, 231 residues long: Large ribosomal subunit protein uL1 (231 aa).

Belongs to the universal ribosomal protein uL1 family. As to quaternary structure, part of the 50S ribosomal subunit.

Its function is as follows. Binds directly to 23S rRNA. The L1 stalk is quite mobile in the ribosome, and is involved in E site tRNA release. Functionally, protein L1 is also a translational repressor protein, it controls the translation of the L11 operon by binding to its mRNA. The protein is Large ribosomal subunit protein uL1 of Pseudomonas fluorescens (strain ATCC BAA-477 / NRRL B-23932 / Pf-5).